An 878-amino-acid chain; its full sequence is E3 ubiquitin-protein ligase BRE1-like 1 (878 aa).

The segment at 1 to 21 (MASTGEPDRKRRHFSSISPSE) is disordered. 4 coiled-coil regions span residues 48-76 (QNLK…IKEK), 200-261 (QLAL…ELQQ), 293-382 (SDRE…EKLQ), and 537-624 (LDMY…ILKS). The RING-type zinc finger occupies 826–865 (CKACNDRPKEVVITKCYHLFCNPCVQKLTGTRQKKCPTCS).

It belongs to the BRE1 family. May act as a tetramer consisting of two copies of HUB1 and two copies of HUB2. Interacts with MED21. Ubiquitously expressed.

The protein resides in the nucleus. The enzyme catalyses S-ubiquitinyl-[E2 ubiquitin-conjugating enzyme]-L-cysteine + [acceptor protein]-L-lysine = [E2 ubiquitin-conjugating enzyme]-L-cysteine + N(6)-ubiquitinyl-[acceptor protein]-L-lysine.. It participates in protein modification; protein ubiquitination. E3 ubiquitin-protein ligase that monoubiquitinates H2B to form H2BK143ub1. H2BK143ub1 gives a specific tag for epigenetic transcriptional activation and is also prerequisite for H3K4me and maybe H3K79me. It thereby plays a central role in histone code and gene regulation. Forms a ubiquitin ligase complex in cooperation with the E2 enzyme UBC2/RAD6. Required for the regulation of flowering time and defense against necrotrophic fungal pathogens. Involved in the control of seed dormancy and germination. The chain is E3 ubiquitin-protein ligase BRE1-like 1 (HUB1) from Arabidopsis thaliana (Mouse-ear cress).